Here is a 198-residue protein sequence, read N- to C-terminus: CASP-like protein 1U1 (198 aa).

Residues 1-30 (MSDTPVVVIPRKGYVDGHHGYHHSYHSGLN) are Cytoplasmic-facing. The helical transmembrane segment at 31–51 (LLLRLLQAFATAAAVIVMLLA) threads the bilayer. At 52–73 (TQTEFTRYGEVRGRWRDYPAYK) the chain is on the extracellular side. The chain crosses the membrane as a helical span at residues 74–94 (WFIIANAVVFVYALLATLVAC). At 95-117 (CALIARRGPLSYSPSAWLTFLLD) the chain is on the cytoplasmic side. The helical transmembrane segment at 118–138 (FVAASALMSAASAALAVALIA) threads the bilayer. Residues 139–165 (RNGQNLQGQHYWPTFCNYVTRFCDYAQ) are Extracellular-facing. The helical transmembrane segment at 166-186 (GAIIASFCGFGLLALSTLLAA) threads the bilayer. The Cytoplasmic segment spans residues 187–198 (SALHHLAWHRLH).

It belongs to the Casparian strip membrane proteins (CASP) family. In terms of assembly, homodimer and heterodimers.

It localises to the cell membrane. The chain is CASP-like protein 1U1 from Physcomitrium patens (Spreading-leaved earth moss).